The sequence spans 99 residues: Large ribosomal subunit protein uL23 (99 aa).

Belongs to the universal ribosomal protein uL23 family. Part of the 50S ribosomal subunit. Contacts protein L29, and trigger factor when it is bound to the ribosome.

Functionally, one of the early assembly proteins it binds 23S rRNA. One of the proteins that surrounds the polypeptide exit tunnel on the outside of the ribosome. Forms the main docking site for trigger factor binding to the ribosome. In Lachnospira eligens (strain ATCC 27750 / DSM 3376 / VPI C15-48 / C15-B4) (Eubacterium eligens), this protein is Large ribosomal subunit protein uL23.